A 416-amino-acid chain; its full sequence is Pre-mRNA-splicing factor slu-7 (416 aa).

Positions 1–34 (MPPPPPNRREQATAAPSSTDKSETGAGAARKEDN) are disordered. The segment at 95-112 (GACENCGAMGHKKKDCLE) adopts a CCHC-type zinc-finger fold. Composition is skewed to basic and acidic residues over residues 168–179 (RRALQGDQKTPD) and 188–213 (DDKS…QSMR). The segment at 168–213 (RRALQGDQKTPDGEGADGPEDDKSGFKYDEESDMGRDRATTKQSMR) is disordered.

Belongs to the SLU7 family. As to quaternary structure, associated with the spliceosome.

It localises to the nucleus. Functionally, involved in pre-mRNA splicing. This is Pre-mRNA-splicing factor slu-7 (slu-7) from Neurospora crassa (strain ATCC 24698 / 74-OR23-1A / CBS 708.71 / DSM 1257 / FGSC 987).